The following is a 365-amino-acid chain: Magnesium-chelatase subunit ChlI (365 aa).

54–61 (GDRGTGKS) is a binding site for ATP.

This sequence belongs to the Mg-chelatase subunits D/I family.

It localises to the plastid. The protein resides in the chloroplast. It catalyses the reaction protoporphyrin IX + Mg(2+) + ATP + H2O = Mg-protoporphyrin IX + ADP + phosphate + 3 H(+). It functions in the pathway porphyrin-containing compound metabolism; chlorophyll biosynthesis. In terms of biological role, involved in chlorophyll biosynthesis; introduces a magnesium ion into protoporphyrin IX to yield Mg-protoporphyrin IX. This chain is Magnesium-chelatase subunit ChlI (chlI), found in Bigelowiella natans (Pedinomonas minutissima).